We begin with the raw amino-acid sequence, 421 residues long: Glucose-1-phosphate adenylyltransferase (421 aa).

Alpha-D-glucose 1-phosphate contacts are provided by residues Y109, G175, 190–191, and S208; that span reads EK.

Belongs to the bacterial/plant glucose-1-phosphate adenylyltransferase family. In terms of assembly, homotetramer.

The enzyme catalyses alpha-D-glucose 1-phosphate + ATP + H(+) = ADP-alpha-D-glucose + diphosphate. The protein operates within glycan biosynthesis; glycogen biosynthesis. In terms of biological role, involved in the biosynthesis of ADP-glucose, a building block required for the elongation reactions to produce glycogen. Catalyzes the reaction between ATP and alpha-D-glucose 1-phosphate (G1P) to produce pyrophosphate and ADP-Glc. This Teredinibacter turnerae (strain ATCC 39867 / T7901) protein is Glucose-1-phosphate adenylyltransferase.